Consider the following 141-residue polypeptide: Arsenate reductase (141 aa).

C12 serves as the catalytic Nucleophile; cysteine thioarsenate intermediate.

It belongs to the ArsC family.

It catalyses the reaction [glutaredoxin]-dithiol + arsenate + glutathione + H(+) = glutathionyl-S-S-[glutaredoxin] + arsenite + H2O. Involved in resistance to arsenate. Catalyzes the reduction of arsenate [As(V)] to arsenite [As(III)]. The chain is Arsenate reductase from Escherichia coli (strain K12).